The following is a 131-amino-acid chain: Sulfurtransferase TusD (131 aa).

C81 functions as the Cysteine persulfide intermediate in the catalytic mechanism.

It belongs to the DsrE/TusD family. As to quaternary structure, heterohexamer, formed by a dimer of trimers. The hexameric TusBCD complex contains 2 copies each of TusB, TusC and TusD. The TusBCD complex interacts with TusE.

The protein resides in the cytoplasm. Part of a sulfur-relay system required for 2-thiolation of 5-methylaminomethyl-2-thiouridine (mnm(5)s(2)U) at tRNA wobble positions. Accepts sulfur from TusA and transfers it in turn to TusE. The sequence is that of Sulfurtransferase TusD from Photorhabdus laumondii subsp. laumondii (strain DSM 15139 / CIP 105565 / TT01) (Photorhabdus luminescens subsp. laumondii).